The chain runs to 295 residues: Phosphatidylglycerol--prolipoprotein diacylglyceryl transferase (295 aa).

7 helical membrane passes run 17 to 37, 57 to 77, 92 to 112, 127 to 147, 196 to 216, 222 to 242, and 255 to 275; these read IKVHWYGIMYLLGFTAAWLLG, LLFYAMLGVVLGGRIGYMLFY, VWDGGMSFHGGLLGVIAACWW, FMAPLVPLGLGFGRIGNFIGA, QLYEALLEGLVMFVVLWAVSA, YLVGGLFALMYGLFRFAVEFV, and WLTRGQILSLPLIAFGLVLLV. Arginine 140 lines the a 1,2-diacyl-sn-glycero-3-phospho-(1'-sn-glycerol) pocket.

It belongs to the Lgt family.

It localises to the cell inner membrane. The catalysed reaction is L-cysteinyl-[prolipoprotein] + a 1,2-diacyl-sn-glycero-3-phospho-(1'-sn-glycerol) = an S-1,2-diacyl-sn-glyceryl-L-cysteinyl-[prolipoprotein] + sn-glycerol 1-phosphate + H(+). It participates in protein modification; lipoprotein biosynthesis (diacylglyceryl transfer). Catalyzes the transfer of the diacylglyceryl group from phosphatidylglycerol to the sulfhydryl group of the N-terminal cysteine of a prolipoprotein, the first step in the formation of mature lipoproteins. The sequence is that of Phosphatidylglycerol--prolipoprotein diacylglyceryl transferase from Stenotrophomonas maltophilia (strain R551-3).